The primary structure comprises 71 residues: Translation initiation factor IF-1 (71 aa).

One can recognise an S1-like domain in the interval 1 to 71 (MSKDDLIQFT…LTKGRVIHRH (71 aa)).

Belongs to the IF-1 family. Component of the 30S ribosomal translation pre-initiation complex which assembles on the 30S ribosome in the order IF-2 and IF-3, IF-1 and N-formylmethionyl-tRNA(fMet); mRNA recruitment can occur at any time during PIC assembly.

It is found in the cytoplasm. Functionally, one of the essential components for the initiation of protein synthesis. Stabilizes the binding of IF-2 and IF-3 on the 30S subunit to which N-formylmethionyl-tRNA(fMet) subsequently binds. Helps modulate mRNA selection, yielding the 30S pre-initiation complex (PIC). Upon addition of the 50S ribosomal subunit IF-1, IF-2 and IF-3 are released leaving the mature 70S translation initiation complex. The sequence is that of Translation initiation factor IF-1 from Rickettsia prowazekii (strain Madrid E).